Consider the following 446-residue polypeptide: Argininosuccinate lyase (446 aa).

Belongs to the lyase 1 family. Argininosuccinate lyase subfamily.

It is found in the cytoplasm. The enzyme catalyses 2-(N(omega)-L-arginino)succinate = fumarate + L-arginine. It functions in the pathway amino-acid biosynthesis; L-arginine biosynthesis; L-arginine from L-ornithine and carbamoyl phosphate: step 3/3. The sequence is that of Argininosuccinate lyase from Phocaeicola vulgatus (strain ATCC 8482 / DSM 1447 / JCM 5826 / CCUG 4940 / NBRC 14291 / NCTC 11154) (Bacteroides vulgatus).